We begin with the raw amino-acid sequence, 242 residues long: Biosynthetic peptidoglycan transglycosylase (242 aa).

Residues 12 to 32 (LLLWLIALSVLLVLLLRWVPP) traverse the membrane as a helical segment.

The protein belongs to the glycosyltransferase 51 family.

It localises to the cell inner membrane. The enzyme catalyses [GlcNAc-(1-&gt;4)-Mur2Ac(oyl-L-Ala-gamma-D-Glu-L-Lys-D-Ala-D-Ala)](n)-di-trans,octa-cis-undecaprenyl diphosphate + beta-D-GlcNAc-(1-&gt;4)-Mur2Ac(oyl-L-Ala-gamma-D-Glu-L-Lys-D-Ala-D-Ala)-di-trans,octa-cis-undecaprenyl diphosphate = [GlcNAc-(1-&gt;4)-Mur2Ac(oyl-L-Ala-gamma-D-Glu-L-Lys-D-Ala-D-Ala)](n+1)-di-trans,octa-cis-undecaprenyl diphosphate + di-trans,octa-cis-undecaprenyl diphosphate + H(+). The protein operates within cell wall biogenesis; peptidoglycan biosynthesis. Peptidoglycan polymerase that catalyzes glycan chain elongation from lipid-linked precursors. This is Biosynthetic peptidoglycan transglycosylase from Stutzerimonas stutzeri (strain A1501) (Pseudomonas stutzeri).